Here is a 393-residue protein sequence, read N- to C-terminus: Tryptophan synthase beta chain (393 aa).

Lysine 86 carries the post-translational modification N6-(pyridoxal phosphate)lysine.

The protein belongs to the TrpB family. In terms of assembly, tetramer of two alpha and two beta chains. It depends on pyridoxal 5'-phosphate as a cofactor.

It carries out the reaction (1S,2R)-1-C-(indol-3-yl)glycerol 3-phosphate + L-serine = D-glyceraldehyde 3-phosphate + L-tryptophan + H2O. The protein operates within amino-acid biosynthesis; L-tryptophan biosynthesis; L-tryptophan from chorismate: step 5/5. Functionally, the beta subunit is responsible for the synthesis of L-tryptophan from indole and L-serine. The chain is Tryptophan synthase beta chain from Alteromonas mediterranea (strain DSM 17117 / CIP 110805 / LMG 28347 / Deep ecotype).